Consider the following 250-residue polypeptide: uncharacterized protein (250 aa).

Residues 182–205 form a disordered region; sequence HTPIVSIQTPPPPAPTPNRPDVPA. Over residues 190-201 the composition is skewed to pro residues; it reads TPPPPAPTPNRP. A helical transmembrane segment spans residues 230 to 250; that stretch reads TRISVIPLLSVLLLVIIIILL.

This sequence belongs to the ascovirus HvAV ORF18 family.

The protein resides in the membrane. This is an uncharacterized protein from Spodoptera frugiperda ascovirus 1a (SfAV-1a).